Consider the following 937-residue polypeptide: CAP-Gly domain-containing linker protein 1 homolog (937 aa).

In terms of domain architecture, CAP-Gly spans 39-81 (GPIHGKDGMFCGIELLEPNGKHDGTFQGVSYFIATPYHGIFAP). 2 disordered regions span residues 90–131 (EELP…VMST) and 264–548 (LPND…SRLQ). Polar residues predominate over residues 268 to 281 (LNANFSNKNSTTTF). Over residues 285–295 (ETPKVEIRENG) the composition is skewed to basic and acidic residues. The span at 296–309 (NLDNSIETPPQQSP) shows a compositional bias: polar residues. Basic and acidic residues-rich tracts occupy residues 317-353 (HESD…KEEP), 383-396 (IEAE…EIKS), 409-424 (PQKE…ETPR), and 463-473 (AKERVEKEKKI). Over residues 492 to 501 (SSIPSTSSAS) the composition is skewed to low complexity. Coiled coils occupy residues 566–740 (EDNE…VDEI) and 773–800 (QQIE…DLMQ). Disordered regions lie at residues 819-866 (MESR…DSMN) and 916-937 (PTIK…GLVM). Positions 832 to 844 (RSRSSASGSRPIS) are enriched in low complexity. The segment covering 845 to 858 (MATSNGGDQRLSTS) has biased composition (polar residues).

In Caenorhabditis elegans, this protein is CAP-Gly domain-containing linker protein 1 homolog.